Here is a 269-residue protein sequence, read N- to C-terminus: Formamidopyrimidine-DNA glycosylase (269 aa).

The Schiff-base intermediate with DNA role is filled by Pro-2. The Proton donor role is filled by Glu-3. The Proton donor; for beta-elimination activity role is filled by Lys-57. Positions 90, 109, and 150 each coordinate DNA. Residues Gln-235–Lys-269 form an FPG-type zinc finger. Residue Arg-259 is the Proton donor; for delta-elimination activity of the active site.

This sequence belongs to the FPG family. Monomer. Zn(2+) is required as a cofactor.

The enzyme catalyses Hydrolysis of DNA containing ring-opened 7-methylguanine residues, releasing 2,6-diamino-4-hydroxy-5-(N-methyl)formamidopyrimidine.. It catalyses the reaction 2'-deoxyribonucleotide-(2'-deoxyribose 5'-phosphate)-2'-deoxyribonucleotide-DNA = a 3'-end 2'-deoxyribonucleotide-(2,3-dehydro-2,3-deoxyribose 5'-phosphate)-DNA + a 5'-end 5'-phospho-2'-deoxyribonucleoside-DNA + H(+). Functionally, involved in base excision repair of DNA damaged by oxidation or by mutagenic agents. Acts as a DNA glycosylase that recognizes and removes damaged bases. Has a preference for oxidized purines, such as 7,8-dihydro-8-oxoguanine (8-oxoG). Has AP (apurinic/apyrimidinic) lyase activity and introduces nicks in the DNA strand. Cleaves the DNA backbone by beta-delta elimination to generate a single-strand break at the site of the removed base with both 3'- and 5'-phosphates. This is Formamidopyrimidine-DNA glycosylase from Escherichia coli (strain 55989 / EAEC).